A 494-amino-acid chain; its full sequence is Nicotianamine aminotransferase 1 (494 aa).

Composition is skewed to low complexity over residues 24–38 and 48–62; these read SGTS…TSSS and STAM…AASS. Positions 24 to 76 are disordered; that stretch reads SGTSYPTRTTTTSSSAPEFTNKKQSTAMAPTTAAAAASSNGGGESDGSSKEWR. N6-(pyridoxal phosphate)lysine is present on Lys-322.

The protein belongs to the class-I pyridoxal-phosphate-dependent aminotransferase family. Requires pyridoxal 5'-phosphate as cofactor. In terms of tissue distribution, expressed in companion and pericycle cells adjacent to the protoxylem of roots. Expressed in companion cells of shoots.

It catalyses the reaction nicotianamine + 2-oxoglutarate = 3''-deamino-3''-oxonicotianamine + L-glutamate. Its function is as follows. Involved in biosynthesis of mugineic acid family phytosiderophores, which are ferric iron chelators produced in graminaceous plants in response to iron deficiency. This chain is Nicotianamine aminotransferase 1, found in Oryza sativa subsp. japonica (Rice).